Consider the following 292-residue polypeptide: Elongation factor Ts (292 aa).

The interval 82–85 is involved in Mg(2+) ion dislocation from EF-Tu; the sequence is TDFV.

Belongs to the EF-Ts family.

It is found in the cytoplasm. Its function is as follows. Associates with the EF-Tu.GDP complex and induces the exchange of GDP to GTP. It remains bound to the aminoacyl-tRNA.EF-Tu.GTP complex up to the GTP hydrolysis stage on the ribosome. The sequence is that of Elongation factor Ts from Bordetella petrii (strain ATCC BAA-461 / DSM 12804 / CCUG 43448).